We begin with the raw amino-acid sequence, 92 residues long: RNA-binding protein Hfq (92 aa).

A Sm domain is found at 9–68 (DPFLNALRRERVPVSVYLVNGIKLQGTIESFDQFVVLLRNTVSQMVYKHAISTVVPARNV). Residues 72-92 (PGGGYVQSNENNQAEDDDVEQ) are disordered.

The protein belongs to the Hfq family. Homohexamer.

Its function is as follows. RNA chaperone that binds small regulatory RNA (sRNAs) and mRNAs to facilitate mRNA translational regulation in response to envelope stress, environmental stress and changes in metabolite concentrations. Also binds with high specificity to tRNAs. This chain is RNA-binding protein Hfq, found in Xanthomonas campestris pv. campestris (strain 8004).